Here is a 207-residue protein sequence, read N- to C-terminus: LPS-assembly lipoprotein LptE (207 aa).

The first 19 residues, 1-19 (MRHRILMLLLGLAVLVTAG), serve as a signal peptide directing secretion. Cysteine 20 is lipidated: N-palmitoyl cysteine. The S-diacylglycerol cysteine moiety is linked to residue cysteine 20.

The protein belongs to the LptE lipoprotein family. As to quaternary structure, component of the lipopolysaccharide transport and assembly complex. Interacts with LptD.

The protein resides in the cell outer membrane. Its function is as follows. Together with LptD, is involved in the assembly of lipopolysaccharide (LPS) at the surface of the outer membrane. Required for the proper assembly of LptD. Binds LPS and may serve as the LPS recognition site at the outer membrane. This chain is LPS-assembly lipoprotein LptE, found in Yersinia enterocolitica serotype O:8 / biotype 1B (strain NCTC 13174 / 8081).